Consider the following 415-residue polypeptide: Multifunctional CCA protein (415 aa).

ATP contacts are provided by glycine 8 and arginine 11. 2 residues coordinate CTP: glycine 8 and arginine 11. Residues aspartate 21 and aspartate 23 each contribute to the Mg(2+) site. 3 residues coordinate ATP: arginine 91, arginine 143, and arginine 146. Residues arginine 91, arginine 143, and arginine 146 each coordinate CTP. Residues 232 to 333 enclose the HD domain; it reads TGVHVMMVID…TRLLERCDAL (102 aa).

It belongs to the tRNA nucleotidyltransferase/poly(A) polymerase family. Bacterial CCA-adding enzyme type 1 subfamily. Monomer. Can also form homodimers and oligomers. Mg(2+) is required as a cofactor. The cofactor is Ni(2+).

The enzyme catalyses a tRNA precursor + 2 CTP + ATP = a tRNA with a 3' CCA end + 3 diphosphate. The catalysed reaction is a tRNA with a 3' CCA end + 2 CTP + ATP = a tRNA with a 3' CCACCA end + 3 diphosphate. Functionally, catalyzes the addition and repair of the essential 3'-terminal CCA sequence in tRNAs without using a nucleic acid template. Adds these three nucleotides in the order of C, C, and A to the tRNA nucleotide-73, using CTP and ATP as substrates and producing inorganic pyrophosphate. tRNA 3'-terminal CCA addition is required both for tRNA processing and repair. Also involved in tRNA surveillance by mediating tandem CCA addition to generate a CCACCA at the 3' terminus of unstable tRNAs. While stable tRNAs receive only 3'-terminal CCA, unstable tRNAs are marked with CCACCA and rapidly degraded. The protein is Multifunctional CCA protein of Cupriavidus pinatubonensis (strain JMP 134 / LMG 1197) (Cupriavidus necator (strain JMP 134)).